Reading from the N-terminus, the 160-residue chain is uncharacterized protein (160 aa).

Positions 1-29 (MCGLGIVPMVKPALFGMLILVIGTSTVQA) are cleaved as a signal peptide.

This is an uncharacterized protein from Sinorhizobium fredii (strain NBRC 101917 / NGR234).